The chain runs to 67 residues: Epsilon-conotoxin TxVA (67 aa).

Positions 1–19 (MRCFPVFIILLLLIASAPC) are cleaved as a signal peptide. The propeptide occupies 20-50 (FDARTKTDDDVPLSSLRDNLKRTIRTRLNIR). 4-carboxyglutamate is present on residues E51 and E54. 2 disulfides stabilise this stretch: C52/C58 and C53/C59. Residue W57 is modified to 6'-bromotryptophan. O-linked (GalNAc...) threonine glycosylation occurs at T60. 4-hydroxyproline is present on P63. Residues 64-67 (LTGR) constitute a propeptide that is removed on maturation.

O-glycan consists of the disaccharide Gal-GalNAc. As to expression, expressed by the venom duct.

The protein resides in the secreted. Epsilon-conotoxins act at presynaptic membranes, blocking the calcium channels or G protein-coupled receptors. Causes hyperactivity upon intracranial injection into mice. Causes dorsal fins drooping in fish. This is Epsilon-conotoxin TxVA from Conus textile (Cloth-of-gold cone).